Reading from the N-terminus, the 145-residue chain is Flagellar assembly factor FliW (145 aa).

This sequence belongs to the FliW family. In terms of assembly, interacts with translational regulator CsrA and flagellin(s).

The protein resides in the cytoplasm. Its function is as follows. Acts as an anti-CsrA protein, binds CsrA and prevents it from repressing translation of its target genes, one of which is flagellin. Binds to flagellin and participates in the assembly of the flagellum. The chain is Flagellar assembly factor FliW from Exiguobacterium sp. (strain ATCC BAA-1283 / AT1b).